A 438-amino-acid chain; its full sequence is Glycogen synthase (438 aa).

Lysine 16 contributes to the ADP-alpha-D-glucose binding site.

Belongs to the glycosyltransferase 1 family. Bacterial/plant glycogen synthase subfamily.

It catalyses the reaction [(1-&gt;4)-alpha-D-glucosyl](n) + ADP-alpha-D-glucose = [(1-&gt;4)-alpha-D-glucosyl](n+1) + ADP + H(+). The protein operates within glycan biosynthesis; glycogen biosynthesis. In terms of biological role, synthesizes alpha-1,4-glucan chains using ADP-glucose. The chain is Glycogen synthase from Thermus caldophilus.